The primary structure comprises 534 residues: Glucans biosynthesis protein D (534 aa).

Residues 1-26 (MQRRDFIRNASLALAAFGLPSLPACA) constitute a signal peptide (tat-type signal).

The protein belongs to the OpgD/OpgG family. In terms of processing, predicted to be exported by the Tat system. The position of the signal peptide cleavage has not been experimentally proven.

It localises to the periplasm. It participates in glycan metabolism; osmoregulated periplasmic glucan (OPG) biosynthesis. Its function is as follows. Probably involved in the control of the structural glucose backbone of osmoregulated periplasmic glucans (OPGs). This is Glucans biosynthesis protein D from Stenotrophomonas maltophilia (strain K279a).